The sequence spans 344 residues: MITERQNEILNLIIDLFTQTHEPVGSKALQASIETSSATIRNEMAKLEKLGLLEKAHTSSGRMPSPAGFKYFVEHSLSLDSVDESDIYQLVKAFDFEAFRLEDILAKASQVLADMTHYSVAILDVEPSHQKLTAFDIVQLSNHDALAVLNLDESKPQTVQFAIPKNFLTRDLVKIKEIVDERLLGRNLMDVHYKLRTEIPQILQKYFTVTDNVLDLFEYIFRELFQESIFVSGKVNALEYAGLDTYQFLNNEQHLAFTIRQGMSENEMATVQVADSNEPALANLSLLTYKFLIPYRGFGLLSLIGPIDMNYRRNVSLINVMGRILAIKLRDYYRYLNSNHYEVN.

It belongs to the HrcA family.

In terms of biological role, negative regulator of class I heat shock genes (grpE-dnaK-dnaJ and groELS operons). Prevents heat-shock induction of these operons. The polypeptide is Heat-inducible transcription repressor HrcA (Streptococcus uberis (strain ATCC BAA-854 / 0140J)).